Consider the following 473-residue polypeptide: Siroheme synthase (473 aa).

The precorrin-2 dehydrogenase /sirohydrochlorin ferrochelatase stretch occupies residues 1–203 (MTLFPIFADL…QQPGLAEQEL (203 aa)). NAD(+) is bound by residues 22–23 (AV) and 43–44 (PR). Ser-128 bears the Phosphoserine mark. Positions 216–473 (GSVVLVGAGP…GLPGPQALAA (258 aa)) are uroporphyrinogen-III C-methyltransferase. Pro-225 serves as a coordination point for S-adenosyl-L-methionine. Asp-248 serves as the catalytic Proton acceptor. Lys-270 acts as the Proton donor in catalysis. S-adenosyl-L-methionine-binding positions include 302 to 304 (GGD), Ile-307, 332 to 333 (TA), Met-384, and Gly-413.

In the N-terminal section; belongs to the precorrin-2 dehydrogenase / sirohydrochlorin ferrochelatase family. This sequence in the C-terminal section; belongs to the precorrin methyltransferase family.

It catalyses the reaction uroporphyrinogen III + 2 S-adenosyl-L-methionine = precorrin-2 + 2 S-adenosyl-L-homocysteine + H(+). The catalysed reaction is precorrin-2 + NAD(+) = sirohydrochlorin + NADH + 2 H(+). The enzyme catalyses siroheme + 2 H(+) = sirohydrochlorin + Fe(2+). It functions in the pathway cofactor biosynthesis; adenosylcobalamin biosynthesis; precorrin-2 from uroporphyrinogen III: step 1/1. The protein operates within cofactor biosynthesis; adenosylcobalamin biosynthesis; sirohydrochlorin from precorrin-2: step 1/1. It participates in porphyrin-containing compound metabolism; siroheme biosynthesis; precorrin-2 from uroporphyrinogen III: step 1/1. Its pathway is porphyrin-containing compound metabolism; siroheme biosynthesis; siroheme from sirohydrochlorin: step 1/1. It functions in the pathway porphyrin-containing compound metabolism; siroheme biosynthesis; sirohydrochlorin from precorrin-2: step 1/1. In terms of biological role, multifunctional enzyme that catalyzes the SAM-dependent methylations of uroporphyrinogen III at position C-2 and C-7 to form precorrin-2 via precorrin-1. Then it catalyzes the NAD-dependent ring dehydrogenation of precorrin-2 to yield sirohydrochlorin. Finally, it catalyzes the ferrochelation of sirohydrochlorin to yield siroheme. This chain is Siroheme synthase, found in Bordetella pertussis (strain Tohama I / ATCC BAA-589 / NCTC 13251).